A 281-amino-acid polypeptide reads, in one-letter code: Ribosomal RNA small subunit methyltransferase A (281 aa).

6 residues coordinate S-adenosyl-L-methionine: Asn-35, Leu-37, Gly-62, Glu-83, Asp-107, and Asn-125.

The protein belongs to the class I-like SAM-binding methyltransferase superfamily. rRNA adenine N(6)-methyltransferase family. RsmA subfamily.

The protein resides in the cytoplasm. The enzyme catalyses adenosine(1518)/adenosine(1519) in 16S rRNA + 4 S-adenosyl-L-methionine = N(6)-dimethyladenosine(1518)/N(6)-dimethyladenosine(1519) in 16S rRNA + 4 S-adenosyl-L-homocysteine + 4 H(+). Functionally, specifically dimethylates two adjacent adenosines (A1518 and A1519) in the loop of a conserved hairpin near the 3'-end of 16S rRNA in the 30S particle. May play a critical role in biogenesis of 30S subunits. This chain is Ribosomal RNA small subunit methyltransferase A, found in Deinococcus geothermalis (strain DSM 11300 / CIP 105573 / AG-3a).